An 84-amino-acid chain; its full sequence is Small ribosomal subunit protein bS18 (84 aa).

Belongs to the bacterial ribosomal protein bS18 family. In terms of assembly, part of the 30S ribosomal subunit. Forms a tight heterodimer with protein bS6.

Its function is as follows. Binds as a heterodimer with protein bS6 to the central domain of the 16S rRNA, where it helps stabilize the platform of the 30S subunit. This is Small ribosomal subunit protein bS18 from Polynucleobacter necessarius subsp. necessarius (strain STIR1).